An 889-amino-acid chain; its full sequence is Translation initiation factor IF-2 (889 aa).

Residues 115-236 show a composition bias toward basic and acidic residues; it reads EAEAQAKAEA…EAERYSDHHI (122 aa). The tract at residues 115–293 is disordered; sequence EAEAQAKAEA…RNRSTAPESM (179 aa). Positions 257-270 are enriched in basic residues; sequence GRRARNKNTAKTKR. The segment covering 271–280 has biased composition (basic and acidic residues); the sequence is GGKDARDGRE. The tr-type G domain occupies 389-558; the sequence is PRAPVVTIMG…LLQAEVLELK (170 aa). Residues 398–405 form a G1 region; that stretch reads GHVDHGKT. 398 to 405 serves as a coordination point for GTP; that stretch reads GHVDHGKT. The tract at residues 423–427 is G2; sequence GITQH. The G3 stretch occupies residues 444–447; it reads DTPG. GTP contacts are provided by residues 444 to 448 and 498 to 501; these read DTPGH and NKMD. The tract at residues 498–501 is G4; it reads NKMD. The segment at 534 to 536 is G5; sequence SAK.

This sequence belongs to the TRAFAC class translation factor GTPase superfamily. Classic translation factor GTPase family. IF-2 subfamily.

The protein localises to the cytoplasm. Functionally, one of the essential components for the initiation of protein synthesis. Protects formylmethionyl-tRNA from spontaneous hydrolysis and promotes its binding to the 30S ribosomal subunits. Also involved in the hydrolysis of GTP during the formation of the 70S ribosomal complex. The sequence is that of Translation initiation factor IF-2 from Shewanella sp. (strain ANA-3).